The primary structure comprises 298 residues: Acetylglutamate kinase (298 aa).

Substrate contacts are provided by residues 69–70 (GG), Arg-91, and Asn-196.

This sequence belongs to the acetylglutamate kinase family. ArgB subfamily.

It localises to the cytoplasm. It carries out the reaction N-acetyl-L-glutamate + ATP = N-acetyl-L-glutamyl 5-phosphate + ADP. It participates in amino-acid biosynthesis; L-arginine biosynthesis; N(2)-acetyl-L-ornithine from L-glutamate: step 2/4. Its function is as follows. Catalyzes the ATP-dependent phosphorylation of N-acetyl-L-glutamate. The chain is Acetylglutamate kinase from Bradyrhizobium sp. (strain BTAi1 / ATCC BAA-1182).